A 377-amino-acid polypeptide reads, in one-letter code: UPF0754 membrane protein RBAM_010020 (377 aa).

2 helical membrane passes run 1–21 and 357–377; these read MGIA…GAVT and YLGG…VILF.

The protein belongs to the UPF0754 family.

The protein resides in the cell membrane. The sequence is that of UPF0754 membrane protein RBAM_010020 from Bacillus velezensis (strain DSM 23117 / BGSC 10A6 / LMG 26770 / FZB42) (Bacillus amyloliquefaciens subsp. plantarum).